The primary structure comprises 388 residues: Chorismate synthase (388 aa).

NADP(+) is bound by residues arginine 39 and arginine 45. FMN contacts are provided by residues 130–132 (RSS), 251–252 (NA), glycine 296, 311–315 (KPIPT), and arginine 337.

This sequence belongs to the chorismate synthase family. In terms of assembly, homotetramer. Requires FMNH2 as cofactor.

It catalyses the reaction 5-O-(1-carboxyvinyl)-3-phosphoshikimate = chorismate + phosphate. The protein operates within metabolic intermediate biosynthesis; chorismate biosynthesis; chorismate from D-erythrose 4-phosphate and phosphoenolpyruvate: step 7/7. Its function is as follows. Catalyzes the anti-1,4-elimination of the C-3 phosphate and the C-6 proR hydrogen from 5-enolpyruvylshikimate-3-phosphate (EPSP) to yield chorismate, which is the branch point compound that serves as the starting substrate for the three terminal pathways of aromatic amino acid biosynthesis. This reaction introduces a second double bond into the aromatic ring system. The chain is Chorismate synthase from Streptococcus pyogenes serotype M1.